The sequence spans 378 residues: Chaperone protein DnaJ (378 aa).

One can recognise a J domain in the interval 5–70 (DYYEVLGVAK…QKRAAYDQYG (66 aa)). The segment at 138–216 (GYDTQIRVPS…CHGSGKVKET (79 aa)) adopts a CR-type zinc-finger fold. Residues Cys151, Cys154, Cys168, Cys171, Cys190, Cys193, Cys204, and Cys207 each coordinate Zn(2+). CXXCXGXG motif repeat units follow at residues 151–158 (CEVCHGSG), 168–175 (CPTCHGQG), 190–197 (CPKCHGTG), and 204–211 (CVHCHGSG).

This sequence belongs to the DnaJ family. Homodimer. Zn(2+) serves as cofactor.

It is found in the cytoplasm. Participates actively in the response to hyperosmotic and heat shock by preventing the aggregation of stress-denatured proteins and by disaggregating proteins, also in an autonomous, DnaK-independent fashion. Unfolded proteins bind initially to DnaJ; upon interaction with the DnaJ-bound protein, DnaK hydrolyzes its bound ATP, resulting in the formation of a stable complex. GrpE releases ADP from DnaK; ATP binding to DnaK triggers the release of the substrate protein, thus completing the reaction cycle. Several rounds of ATP-dependent interactions between DnaJ, DnaK and GrpE are required for fully efficient folding. Also involved, together with DnaK and GrpE, in the DNA replication of plasmids through activation of initiation proteins. The protein is Chaperone protein DnaJ of Burkholderia ambifaria (strain MC40-6).